A 481-amino-acid chain; its full sequence is GDP-fucose protein O-fucosyltransferase 3 (481 aa).

Over M1–K8 the chain is Cytoplasmic. A helical; Signal-anchor for type II membrane protein transmembrane segment spans residues L9–E31. Over L32 to D481 the chain is Lumenal. 3 N-linked (GlcNAc...) asparagine glycosylation sites follow: N110, N168, and N318. C389 and C392 are joined by a disulfide. N468 is a glycosylation site (N-linked (GlcNAc...) asparagine).

Belongs to the glycosyltransferase 10 family. In terms of tissue distribution, widely expressed, with a higher expression in liver and thymus.

Its subcellular location is the endoplasmic reticulum membrane. The enzyme catalyses L-threonyl-[protein] + GDP-beta-L-fucose = 3-O-(alpha-L-fucosyl)-L-threonyl-[protein] + GDP + H(+). It carries out the reaction L-seryl-[protein] + GDP-beta-L-fucose = 3-O-(alpha-L-fucosyl)-L-seryl-[protein] + GDP + H(+). The protein operates within protein modification; protein glycosylation. Its function is as follows. Protein O-fucosyltransferase that specifically catalyzes O-fucosylation of serine or threonine residues in EMI domains of target proteins, such as MMRN1, MMRN2 and EMID1. Attaches fucose through an O-glycosidic linkage. O-fucosylation of EMI domain-containing proteins may be required for facilitating protein folding and secretion. May also show alpha-(1,3)-fucosyltransferase activity toward the innermost N-acetyl glucosamine (GlcNAc) residue in biantennary N-glycan acceptors. However, this was tested with a library of synthetic substrates and this activity is unsure in vivo. May be involved in biosynthesis of Lewis X-carrying biantennary N-glycans that regulate neuron stem cell self-renewal during brain development. The chain is GDP-fucose protein O-fucosyltransferase 3 from Mus musculus (Mouse).